Consider the following 234-residue polypeptide: Uridylate kinase (234 aa).

Residue 10-11 (GS) coordinates ATP. Gly44 contacts UMP. ATP is bound by residues Gly45 and Arg49. Residues Asp66 and 114 to 120 (ITPGQTT) each bind UMP. The ATP site is built by Thr140, Tyr146, and Asp149.

The protein belongs to the UMP kinase family. Homohexamer.

It is found in the cytoplasm. The catalysed reaction is UMP + ATP = UDP + ADP. It functions in the pathway pyrimidine metabolism; CTP biosynthesis via de novo pathway; UDP from UMP (UMPK route): step 1/1. Its activity is regulated as follows. Inhibited by UTP. Functionally, catalyzes the reversible phosphorylation of UMP to UDP. The sequence is that of Uridylate kinase from Methanoregula boonei (strain DSM 21154 / JCM 14090 / 6A8).